A 302-amino-acid chain; its full sequence is Ribosomal protein L11 methyltransferase (302 aa).

Residues Thr148, Gly169, Asp191, and Asn237 each contribute to the S-adenosyl-L-methionine site.

Belongs to the methyltransferase superfamily. PrmA family.

The protein resides in the cytoplasm. It carries out the reaction L-lysyl-[protein] + 3 S-adenosyl-L-methionine = N(6),N(6),N(6)-trimethyl-L-lysyl-[protein] + 3 S-adenosyl-L-homocysteine + 3 H(+). Methylates ribosomal protein L11. This Desulfosudis oleivorans (strain DSM 6200 / JCM 39069 / Hxd3) (Desulfococcus oleovorans) protein is Ribosomal protein L11 methyltransferase.